The primary structure comprises 540 residues: MDHLNLCRYLTESILTDLELTLIDENENTLVINVHKLILSINCQYFETLFSGQFIDSQKNNLKLLVPDIHVVRDIIYGFYKNPIKYKNYPDWLYELKKIVCQNFLCLETNIEILHNIIVPTNGFDKLLDTIDLIGYDSDTISLLVGNMPDNYDLTKLPIELIRQMFDVPMFNMIYVSDKDGTFKIGNGNISFNITSNTLINNGHFEFSSIHNKIIYHHVCDIYVYDLLNYTTNKFTNPISHTIKSIVLTPDQEYIIYDSSPQIISKFDFISMEIIESRFAPTGAVVNDIFSSTELGHFGKIEELQCCNPNLLIIGSNVLSFYNVNDMLLMNIIENNIIPNDLYGRIYSSSIKKGRIFVSLLNDIIFVLSSINMYFIKPDTYEYIKKIHCNNFYNHDYCATNNDFWDICNINQDVIAILVGNLLTIYNWKLDKTIIQIDICHTECNGSYCKIDKIVYDSTTKLLFVDCSNSRSGKKIYSILMDNIDLNIPINNVDFSIFSKNKIMRYGNPKCISGIKKFKIIDNYKSKLYNNIEKYLKNNQ.

A BTB domain is found at 16–88; the sequence is TDLELTLIDE…FYKNPIKYKN (73 aa). Residues 356 to 376 traverse the membrane as a helical segment; that stretch reads IFVSLLNDIIFVLSSINMYFI.

It belongs to the mimivirus BTB/WD family.

It is found in the membrane. This Acanthamoeba polyphaga (Amoeba) protein is Putative BTB/POZ domain-containing protein R224.